The chain runs to 143 residues: Large ribosomal subunit protein uL13 (143 aa).

This sequence belongs to the universal ribosomal protein uL13 family. Part of the 50S ribosomal subunit.

In terms of biological role, this protein is one of the early assembly proteins of the 50S ribosomal subunit, although it is not seen to bind rRNA by itself. It is important during the early stages of 50S assembly. In Natranaerobius thermophilus (strain ATCC BAA-1301 / DSM 18059 / JW/NM-WN-LF), this protein is Large ribosomal subunit protein uL13.